The chain runs to 223 residues: MSPWEAKWIRHSEVRPFPQPEPITVEEKVAVMLKPEIHVKNGCHPYPAVNDLGETNSGLKTKGAPSGMCKGSGWGSQVYGRHALFKGVWAIMYSWYFPKDMPSTDFGHRHDWEHVIVWIEKPVVENVKILAVTPSAHDGYSKQVPPNPGHLNGLAAKINYESKWPINHALEPTGLGGEKQDLILWEQLSSNARHALNIVHWGDANTPFNDYVFMGKLEKAFPL.

The short motif at 90-100 (AIMYSWYFPKD) is the Conserved undecapeptide motif element. Residues 107 to 113 (GHRHDWE) carry the Conserved p motif motif.

This sequence belongs to the Necrosis inducing protein (NPP1) family.

The protein localises to the secreted. It localises to the host cytoplasm. Functionally, probable secreted effector that may act as a pathogen-associated molecular pattern (PAMP) recognized by the plant immune system. Seems not to induce necrosis, neither in several susceptible or resistant Vitis species nor in the dicot model plant Nicotiana benthamiana. This Plasmopara viticola (Downy mildew of grapevine) protein is NLP effector protein 2.